Here is a 726-residue protein sequence, read N- to C-terminus: Catalase-peroxidase (726 aa).

Residues 1 to 25 (MDAKTDDSAGKCPFTGGGRRGHRNR) are disordered. The segment at residues 96-218 (WHSAGTYRIT…LAAVQMGLIY (123 aa)) is a cross-link (tryptophyl-tyrosyl-methioninium (Trp-Tyr) (with M-244)). The active-site Proton acceptor is histidine 97. The segment at residues 218-244 (YVNPEGPNGNPDPVAAAKDIRETFYRM) is a cross-link (tryptophyl-tyrosyl-methioninium (Tyr-Met) (with W-96)). Residue histidine 259 participates in heme b binding.

It belongs to the peroxidase family. Peroxidase/catalase subfamily. Homodimer or homotetramer. The cofactor is heme b. Post-translationally, formation of the three residue Trp-Tyr-Met cross-link is important for the catalase, but not the peroxidase activity of the enzyme.

It carries out the reaction H2O2 + AH2 = A + 2 H2O. The enzyme catalyses 2 H2O2 = O2 + 2 H2O. Functionally, bifunctional enzyme with both catalase and broad-spectrum peroxidase activity. The chain is Catalase-peroxidase from Chelativorans sp. (strain BNC1).